Reading from the N-terminus, the 385-residue chain is UPF0764 protein C16orf89 homolog (385 aa).

The first 20 residues, 1–20 (MARLGLLLLLLLALPPHFSS), serve as a signal peptide directing secretion. The disordered stretch occupies residues 344–385 (AHPEYYPNHGDPYSSSQSPASNYQDGAAGPDVQRTGRPLSVS). A compositionally biased stretch (polar residues) spans 356-367 (YSSSQSPASNYQ).

This sequence belongs to the UPF0764 family. In terms of assembly, homodimer. In terms of processing, glycosylated. Predominantly expressed in thyroid tissue.

The protein resides in the secreted. This is UPF0764 protein C16orf89 homolog from Mus musculus (Mouse).